Consider the following 518-residue polypeptide: Lysine 5,6-aminomutase alpha subunit (518 aa).

Residues 184–189 (RTTGQS), Ser-238, Tyr-263, Arg-268, and Asn-299 contribute to the pyridoxal 5'-phosphate site.

This sequence belongs to the KamD family. As to quaternary structure, heterotetramer of 2 alpha and 2 beta subunits. Adenosylcob(III)alamin serves as cofactor. The cofactor is pyridoxal 5'-phosphate.

The catalysed reaction is (3S)-3,6-diaminohexanoate = (3S,5S)-3,5-diaminohexanoate. It catalyses the reaction D-lysine = (2R,5S)-2,5-diaminohexanoate. Its pathway is amino-acid degradation; L-lysine degradation via acetate pathway. Functionally, catalyzes the migration of the L-beta-lysine and D-lysine epsilon amino group to the delta carbon to produce 3,5-diaminohexanoate and 2,5-diaminohexanoate, respectively. This chain is Lysine 5,6-aminomutase alpha subunit, found in Fusobacterium nucleatum subsp. nucleatum (strain ATCC 25586 / DSM 15643 / BCRC 10681 / CIP 101130 / JCM 8532 / KCTC 2640 / LMG 13131 / VPI 4355).